Reading from the N-terminus, the 235-residue chain is tRNA (guanine-N(1)-)-methyltransferase (235 aa).

Residues Gly-113 and 133–138 (IGDYIL) each bind S-adenosyl-L-methionine.

The protein belongs to the RNA methyltransferase TrmD family. In terms of assembly, homodimer.

It localises to the cytoplasm. It catalyses the reaction guanosine(37) in tRNA + S-adenosyl-L-methionine = N(1)-methylguanosine(37) in tRNA + S-adenosyl-L-homocysteine + H(+). Specifically methylates guanosine-37 in various tRNAs. In Wolbachia sp. subsp. Brugia malayi (strain TRS), this protein is tRNA (guanine-N(1)-)-methyltransferase.